The primary structure comprises 325 residues: tRNA N6-adenosine threonylcarbamoyltransferase (325 aa).

Fe cation is bound by residues His107, His111, and Tyr127. Substrate is bound by residues 127–131 (YVSGG), Asp159, Gly172, Glu176, and Asn257. Fe cation is bound at residue Asp285.

It belongs to the KAE1 / TsaD family. In terms of assembly, monomer. Component of the KEOPS complex that consists of Kae1, Bud32, Cgi121 and Pcc1; the whole complex dimerizes. Fe(2+) is required as a cofactor.

The protein localises to the cytoplasm. The catalysed reaction is L-threonylcarbamoyladenylate + adenosine(37) in tRNA = N(6)-L-threonylcarbamoyladenosine(37) in tRNA + AMP + H(+). Required for the formation of a threonylcarbamoyl group on adenosine at position 37 (t(6)A37) in tRNAs that read codons beginning with adenine. Is a component of the KEOPS complex that is probably involved in the transfer of the threonylcarbamoyl moiety of threonylcarbamoyl-AMP (TC-AMP) to the N6 group of A37. Kae1 likely plays a direct catalytic role in this reaction, but requires other protein(s) of the complex to fulfill this activity. The polypeptide is tRNA N6-adenosine threonylcarbamoyltransferase (Thermococcus kodakarensis (strain ATCC BAA-918 / JCM 12380 / KOD1) (Pyrococcus kodakaraensis (strain KOD1))).